Reading from the N-terminus, the 190-residue chain is UPF0316 protein Mboo_0605 (190 aa).

3 helical membrane passes run 3–23, 41–61, and 67–87; these read IGTFWSVAAIPLLILVARIAE, LAAYVGIVKTGIWLISTGLVL, and FWNLFAYLAGYGMGTVLGMEI.

Belongs to the UPF0316 family.

The protein localises to the cell membrane. This is UPF0316 protein Mboo_0605 from Methanoregula boonei (strain DSM 21154 / JCM 14090 / 6A8).